Consider the following 105-residue polypeptide: Nitrogen fixation nifHD region GlnB-like protein 1 (105 aa).

Belongs to the P(II) protein family.

Could be involved in the regulation of nitrogen fixation. In Methanothermococcus thermolithotrophicus (Methanococcus thermolithotrophicus), this protein is Nitrogen fixation nifHD region GlnB-like protein 1 (glnBA).